The primary structure comprises 2281 residues: Retinal-specific phospholipid-transporting ATPase ABCA4 (2281 aa).

Over 1–24 (MGFARQIKLLLWKNWTLRKRQKIR) the chain is Cytoplasmic. A helical membrane pass occupies residues 25 to 45 (FVVELVWPLSLFLVLIWLRNV). The Extracellular segment spans residues 46 to 646 (NPLYSKHECH…MPYPCFVDDS (601 aa)). Disulfide bonds link Cys54–Cys81 and Cys75–Cys324. N-linked (GlcNAc...) asparagine glycosylation occurs at Asn98. Residues Ser336 and Asn338 each contribute to the Mg(2+) site. A disulfide bridge links Cys370 with Cys519. 2 N-linked (Hex...) asparagine glycosylation sites follow: Asn415 and Asn504. Positions 587 and 653 each coordinate an N-all-trans-retinylidenephosphatidylethanolamine. 3 disulfide bridges follow: Cys641–Cys1488, Cys1442–Cys1453, and Cys1486–Cys1500. A helical membrane pass occupies residues 647 to 667 (FMIILNRCFPIFMVLAWIYSV). The Cytoplasmic segment spans residues 668 to 699 (SMTVKSIVLEKELRLKETLKNQGVSNRVIWCT). Residues 700–720 (WFLDSFSIMSMSICLLTIFIM) form a helical membrane-spanning segment. The Extracellular portion of the chain corresponds to 721 to 730 (HGRILHYSNP). Residues 731–751 (FILFLFLLAFSIATIMQCFLL) traverse the membrane as a helical segment. Residues 752–759 (STFFSRAS) are Cytoplasmic-facing. Residues 760-780 (LAAACSGVIYFTLYLPHILCF) form a helical membrane-spanning segment. At 781–835 (AWQDRITADMKMAVSLLSPVAFGFGTEYLARFEEQGVGLQWSNIGNSPMEGDEFS) the chain is on the extracellular side. Residues 836 to 856 (FLMSMKMMLLDAALYGLLAWY) form a helical membrane-spanning segment. The Cytoplasmic portion of the chain corresponds to 857–1374 (LDQVFPGDYG…IRSHKDFLAQ (518 aa)). Residue Thr901 is modified to Phosphothreonine. The 232-residue stretch at 929 to 1160 (VCVKNLVKIF…FGTGFYLTLV (232 aa)) folds into the ABC transporter 1 domain. Residues Phe938, Gly966, and Lys969 each coordinate ATP. Thr970 contacts Mg(2+). Residues Thr971, Gln1010, Lys1054, Gly1064, Gly1065, and His1118 each coordinate ATP. Ser1185 is subject to Phosphoserine. The segment at 1295-1340 (ENINLRHPCSGPSEKAGQTPQGSSSHPREPAAHPEGQPPPEREGHS) is disordered. Positions 1310-1319 (AGQTPQGSSS) are enriched in polar residues. Thr1313 carries the post-translational modification Phosphothreonine. Residues Ser1317 and Ser1319 each carry the phosphoserine modification. Residues 1375–1395 (IVLPATFVFLALMLSLIIPPF) traverse the membrane as a helical segment. The Extracellular segment spans residues 1396–1679 (GEYPALTLHP…TVLTTSVDAV (284 aa)). A glycan (N-linked (Hex...) asparagine) is linked at Asn1455. A glycan (N-linked (Hex...) asparagine) is linked at Asn1527. Residue Asn1586 is glycosylated (N-linked (GlcNAc...) asparagine). N-linked (Hex...) asparagine glycosylation occurs at Asn1660. The chain crosses the membrane as a helical span at residues 1680–1700 (VAICVIFAMSFVPASFVLYLI). The Cytoplasmic segment spans residues 1701 to 1725 (QERVNKAKHLQFVSGVSPTTYWLTN). The helical transmembrane segment at 1726–1746 (FLWDIMNYTVSAALVVGIFIG) threads the bilayer. Residues 1747 to 1757 (FQKKAYTSSEN) are Extracellular-facing. The helical transmembrane segment at 1758–1778 (LPALVALLMLYGWAVIPMMYP) threads the bilayer. The Cytoplasmic portion of the chain corresponds to 1779 to 1790 (ASFLFDIPSTAY). The chain crosses the membrane as a helical span at residues 1791–1811 (VALSCANLFIGINSSAITFVL). Topologically, residues 1812–1829 (ELFENNRTLLRINAMLRK) are extracellular. An N-linked (GlcNAc...) asparagine glycan is attached at Asn1817. A helical transmembrane segment spans residues 1830–1850 (LLIIFPHFCLGRGLIDLALSQ). Over 1851-1879 (AVTDVYARFGEEHSSNPFQWDLIGKNLAA) the chain is Cytoplasmic. Residues 1880–1900 (MAVEGVVYFLLTLLIQYQFFF) traverse the membrane as a helical segment. The Extracellular segment spans residues 1901–2281 (SRWTTEPAKE…VDKGNSAPQG (381 aa)). Asn1931 is a glycosylation site (N-linked (GlcNAc...) asparagine). One can recognise an ABC transporter 2 domain in the interval 1936 to 2168 (LRLNELTKVY…FGDGYIVTMK (233 aa)). The ATP site is built by Asn1972, Gly1973, Lys1976, Thr1977, and Thr1978. Thr1977 serves as a coordination point for Mg(2+). N-linked (GlcNAc...) asparagine glycosylation is found at Asn2004 and Asn2050. Gly2071 contributes to the ATP binding site. Positions 2242 to 2247 (VFVNFA) are essential for ATP binding and ATPase activity. An N-linked (GlcNAc...) asparagine glycan is attached at Asn2251. A disordered region spans residues 2262–2281 (AAGASRQAKEVDKGNSAPQG).

Post-translationally, N-glycosylated. In terms of processing, proteolytic cleavage by trypsin leads to a 120-kDa N-terminal fragment and a 115-kDa C-terminal fragment that are linked through disulfide bonds. Phosphorylation is independent of light exposure and modulates ATPase activity. Expressed in retina namely in the periphery and incisures of the rod outer segments (ROS).

The protein resides in the membrane. It localises to the cell projection. It is found in the cilium. The protein localises to the photoreceptor outer segment. Its subcellular location is the cytoplasmic vesicle. The protein resides in the endoplasmic reticulum. It catalyses the reaction ATP + H2O + phospholipidSide 1 = ADP + phosphate + phospholipidSide 2.. The enzyme catalyses an N-all-trans-retinylidenephosphatidylethanolamine(out) + ATP + H2O = an N-all-trans-retinylidenephosphatidylethanolamine(in) + ADP + phosphate + H(+). The catalysed reaction is a 1,2-diacyl-sn-glycero-3-phosphoethanolamine(out) + ATP + H2O = a 1,2-diacyl-sn-glycero-3-phosphoethanolamine(in) + ADP + phosphate + H(+). It carries out the reaction N-11-cis-retinylidenephosphatidylethanolamine(out) + ATP + H2O = N-11-cis-retinylidenephosphatidylethanolamine(in) + ADP + phosphate + H(+). It catalyses the reaction ATP + H2O = ADP + phosphate + H(+). Its activity is regulated as follows. All-trans-retinal transport activity is reduced by EDTA chelation of Mg2+. All-trans-retinal transport activity is inhibited by N-ethylmaleimide (NEM). Phosphatidylethanolamine transport is strongly inhibited by beryllium fluoride and NEM. Flippase that catalyzes in an ATP-dependent manner the transport of retinal-phosphatidylethanolamine conjugates like the 11-cis and all-trans isomers of N-retinylidene-phosphatidylethanolamine from the lumen to the cytoplasmic leaflet of photoreceptor outer segment disk membranes, where N-cis-retinylidene-phosphatidylethanolamine (N-cis-R-PE) is then isomerized to its all-trans isomer (N-trans-R-PE) and reduced by RDH8 to produce all-trans-retinol (all-trans-rol) and therefore prevents the accumulation of excess of 11-cis-retinal and its schiff-base conjugate and the formation of toxic bisretinoid. Displays both ATPase and GTPase activity that is strongly influenced by the lipid environment and the presence of retinoid compounds. Binds the unprotonated form of N-retinylidene-phosphatidylethanolamine with high affinity in the absence of ATP and ATP binding and hydrolysis induce a protein conformational change that causes the dissociation of N-retinylidene-phosphatidylethanolamine. The polypeptide is Retinal-specific phospholipid-transporting ATPase ABCA4 (Bos taurus (Bovine)).